A 1058-amino-acid chain; its full sequence is Bromodomain-containing protein 1 (1058 aa).

Basic residues predominate over residues 1–12 (MRRKGRCHRGSA). The disordered stretch occupies residues 1 to 25 (MRRKGRCHRGSAARHPSSPCSIKHS). The tract at residues 31–80 (LTYAQAQRMVEIEIEGRLHRISIFDPLEIILEDDLTAQEMSECNSNKENS) is interaction with KAT7/HBO1 and histones. Phosphoserine is present on S128. The PHD-type 1 zinc-finger motif lies at 214–264 (DAVCCICMDGECQNSNVILFCDMCNLAVHQECYGVPYIPEGQWLCRHCLQS). The C2HC pre-PHD-type zinc-finger motif lies at 268-301 (PADCVLCPNKGGAFKKTDDDRWGHVVCALWIPEV). The PHD-type 2 zinc finger occupies 325–389 (LTCYLCKQKG…RKTAYCDVHT (65 aa)). An N6-acetyllysine mark is found at K368, K516, and K519. Glycyl lysine isopeptide (Lys-Gly) (interchain with G-Cter in SUMO2) cross-links involve residues K554 and K594. The Bromo domain maps to 562 to 666 (LRLTPLTVLL…DQGGVVLRQA (105 aa)). Polar residues predominate over residues 754-763 (KLSQQHSQAP). Disordered stretches follow at residues 754-776 (KLSQ…EDEA) and 791-847 (LETL…AAPR). Position 803 is a phosphoserine (S803). N6-acetyllysine is present on K903. The PWWP domain maps to 929–1012 (PLKVVWAKCS…KSKMVPLGVD (84 aa)). Residues S1052 and S1055 each carry the phosphoserine modification.

As to quaternary structure, component of some HBO1 complexes composed of KAT7/HBO1, MEAF6, ING4 and BRD1/BRPF2. Component of the MOZ/MORF complex composed at least of ING5, KAT6A, KAT6B, MEAF6 and one of BRPF1, BRD1/BRPF2 and BRPF3. Interacts (via PHD-type zinc finger domain) with unmodified histone H3. Interacts (via PWWP domain) with dimethylated and trimethylated 'Lys-79' on histone H3.

It is found in the nucleus. It localises to the chromosome. In terms of biological role, scaffold subunit of various histone acetyltransferase (HAT) complexes, such as the MOZ/MORF and HBO1 complexes, that acts as a regulator of hematopoiesis. Plays a key role in HBO1 complex by directing KAT7/HBO1 specificity towards histone H3 'Lys-14' acetylation (H3K14ac), thereby promoting erythroid differentiation. The sequence is that of Bromodomain-containing protein 1 from Mus musculus (Mouse).